The chain runs to 156 residues: Cyclin-dependent protein kinase inhibitor SMR10 (156 aa).

The segment at 52-90 (QDQDLEPKSQETNNCSRKEGATVKKEEEEEDDYCKTPTR) is disordered. Residues 67–77 (SRKEGATVKKE) are compositionally biased toward basic and acidic residues.

Functionally, probable cyclin-dependent protein kinase (CDK) inhibitor that functions as a repressor of mitosis in the endoreduplication cell cycle. In Arabidopsis thaliana (Mouse-ear cress), this protein is Cyclin-dependent protein kinase inhibitor SMR10.